Consider the following 156-residue polypeptide: Movement protein P17 (156 aa).

The homodimerization stretch occupies residues 38–54; sequence AEDAEEEAIAAQEELEF. Disordered stretches follow at residues 55–80 and 131–156; these read PEDE…EVSP and AKYH…IKRG. The interval 57–156 is RNA-binding; it reads DEAQARHSCL…RAAPKLIKRG (100 aa). Phosphoserine is present on residues S71, S79, S137, and S140. A compositionally biased stretch (basic residues) spans 144–156; that stretch reads KLRRAAPKLIKRG.

Belongs to the polerovirus movement protein family. Homodimer. Heterodimer with movement protein P3a. Post-translationally, expressed as a nonphosphorylated 20kDa form and a phosphorylated 22kDa form. Phosphorylated by a host PKC-related kinase. Serine phosphorylation is required for plamodesma targeting.

It localises to the host cell junction. The protein localises to the host plasmodesma. Its subcellular location is the host mitochondrion outer membrane. The protein resides in the host Golgi apparatus. It is found in the host chloroplast envelope. Together with movement protein P3a, facilitates long-distance movement of virions in host. Transports viral genome to neighboring plant cells directly through plasmosdesmata, without any budding. The movement protein allows efficient cell to cell propagation, by bypassing the host cell wall barrier. Binds ssRNA. This chain is Movement protein P17, found in Solanum tuberosum (Potato).